We begin with the raw amino-acid sequence, 595 residues long: FERM domain-containing protein 3 (595 aa).

The FERM domain maps to 32 to 312 (MKCTIRLLDD…ENQAFYKYAK (281 aa)). A helical transmembrane segment spans residues 529–549 (LLVVGLGLLLFVFPLLLLLLE).

It localises to the membrane. Its function is as follows. Putative tumor suppressor gene that may be implicated in the origin and progression of lung cancer. The sequence is that of FERM domain-containing protein 3 (Frmd3) from Mus musculus (Mouse).